A 269-amino-acid polypeptide reads, in one-letter code: Interleukin-1 beta (269 aa).

Residues 1–116 constitute a propeptide that is removed on maturation; it reads MAEVPELASE…TRNNDACVHD (116 aa).

It belongs to the IL-1 family. In terms of assembly, monomer. In its precursor form, weakly interacts with full-length MEFV; the mature cytokine does not interact at all. Interacts with integrins ITGAV:ITGBV and ITGA5:ITGB1; integrin-binding is required for IL1B signaling. Interacts with cargo receptor TMED10; the interaction is direct and is required for the secretion of IL1B mature form. Interacts with HSP90AB1; the interaction facilitates cargo translocation into the ERGIC. Interacts with HSP90B1; the interaction facilitates cargo translocation into the ERGIC.

The protein localises to the cytoplasm. It localises to the cytosol. Its subcellular location is the secreted. The protein resides in the lysosome. It is found in the extracellular exosome. Its function is as follows. Potent pro-inflammatory cytokine. Initially discovered as the major endogenous pyrogen, induces prostaglandin synthesis, neutrophil influx and activation, T-cell activation and cytokine production, B-cell activation and antibody production, and fibroblast proliferation and collagen production. Promotes Th17 differentiation of T-cells. Synergizes with IL12/interleukin-12 to induce IFNG synthesis from T-helper 1 (Th1) cells. Plays a role in angiogenesis by inducing VEGF production synergistically with TNF and IL6. Involved in transduction of inflammation downstream of pyroptosis: its mature form is specifically released in the extracellular milieu by passing through the gasdermin-D (GSDMD) pore. The protein is Interleukin-1 beta (IL1B) of Macaca mulatta (Rhesus macaque).